A 3718-amino-acid polypeptide reads, in one-letter code: Laminin subunit alpha-5 (3718 aa).

A signal peptide spans 1 to 40 (MAKRGGQLCAGSAPGALGPRSPAPRPLLLLLAGLALVGEA). A Laminin N-terminal domain is found at 46–304 (DGFSLHPPYF…SIKDISIGGR (259 aa)). 3 N-linked (GlcNAc...) asparagine glycosylation sites follow: Asn100, Asn148, and Asn248. 12 cysteine pairs are disulfide-bonded: Cys305–Cys314, Cys307–Cys327, Cys329–Cys338, Cys341–Cys361, Cys364–Cys373, Cys366–Cys398, Cys401–Cys410, Cys413–Cys431, Cys434–Cys445, Cys436–Cys452, Cys454–Cys463, and Cys466–Cys476. Laminin EGF-like domains are found at residues 305–363 (CVCH…ECQS), 364–433 (CNCH…VCRP), and 434–479 (CDCE…CYPL). Asn383 carries an N-linked (GlcNAc...) asparagine glycan. Asn457 carries N-linked (GlcNAc...) asparagine glycosylation. Asn485 is a glycosylation site (N-linked (GlcNAc...) asparagine). 29 disulfide bridges follow: Cys500-Cys512, Cys502-Cys521, Cys523-Cys532, Cys535-Cys544, Cys547-Cys559, Cys549-Cys566, Cys568-Cys577, Cys580-Cys590, Cys593-Cys605, Cys595-Cys611, Cys613-Cys622, Cys625-Cys635, Cys638-Cys650, Cys640-Cys656, Cys658-Cys667, Cys670-Cys680, Cys683-Cys695, Cys685-Cys702, Cys704-Cys713, Cys716-Cys731, Cys752-Cys761, Cys764-Cys779, Cys782-Cys796, Cys784-Cys802, Cys804-Cys813, Cys816-Cys831, Cys834-Cys846, Cys836-Cys853, and Cys855-Cys864. 7 Laminin EGF-like domains span residues 500–546 (CDCN…SCHP), 547–592 (CQCS…LCQL), 593–637 (CGCS…DCHA), 638–682 (CACD…SCIP), 683–728 (CHCS…YCEA), 729–781 (GSCH…GCTR), and 782–833 (CSCD…GCRS). The Laminin EGF-like 11; truncated domain occupies 834–855 (CRCDVGGALGQGCEPKTGACRC). Residues 856–1442 (RPNTQGPTCS…SLFYNNGALP (587 aa)) are domain IV 1 (domain IV B). 3 N-linked (GlcNAc...) asparagine glycosylation sites follow: Asn905, Asn926, and Asn964. Residues 1253–1284 (LTQSQELSPGAPPEGPQPRPPTAVDPNAEPTL) are disordered. The span at 1262 to 1275 (GAPPEGPQPRPPTA) shows a compositional bias: pro residues. Asn1335 carries N-linked (GlcNAc...) asparagine glycosylation. 16 disulfide bridges follow: Cys1443/Cys1455, Cys1445/Cys1462, Cys1464/Cys1473, Cys1476/Cys1486, Cys1489/Cys1496, Cys1491/Cys1503, Cys1505/Cys1514, Cys1517/Cys1530, Cys1533/Cys1548, Cys1535/Cys1555, Cys1557/Cys1566, Cys1569/Cys1579, Cys1582/Cys1594, Cys1584/Cys1601, Cys1603/Cys1612, and Cys1615/Cys1630. 4 Laminin EGF-like domains span residues 1443–1488 (CGCH…NCRP), 1489–1532 (CDCG…GCEE), 1533–1581 (CNCS…SCRP), and 1582–1632 (CDCH…GCTR). N-linked (GlcNAc...) asparagine glycosylation is present at Asn1534. Positions 1633 to 1642 (CFCFGATERC) constitute a Laminin EGF-like 16; first part domain. The 186-residue stretch at 1646–1831 (NLARHEFVDM…RGPPASNVEL (186 aa)) folds into the Laminin IV type A domain. 2 short sequence motifs (cell attachment site) span residues 1723–1725 (RGD) and 1839–1841 (RGD). The 33-residue stretch at 1832–1864 (CMCPANYRGDSCQECAPGYYRDTKGLFLGRCVP) folds into the Laminin EGF-like 16; second part domain. Cystine bridges form between Cys1865-Cys1874, Cys1867-Cys1881, Cys1884-Cys1893, Cys1896-Cys1912, Cys1915-Cys1930, Cys1917-Cys1939, Cys1941-Cys1950, Cys1953-Cys1968, Cys1971-Cys1986, Cys1973-Cys1993, Cys1996-Cys2005, Cys2008-Cys2022, Cys2025-Cys2035, Cys2027-Cys2042, Cys2044-Cys2053, Cys2056-Cys2069, Cys2072-Cys2083, Cys2074-Cys2090, Cys2092-Cys2101, Cys2104-Cys2116, Cys2119-Cys2126, Cys2121-Cys2133, Cys2135-Cys2144, and Cys2147-Cys2166. 6 consecutive Laminin EGF-like domains span residues 1865 to 1914 (CQCH…PCVS), 1915 to 1970 (CPCP…SCQP), 1971 to 2024 (CDCS…NCTR), 2025 to 2071 (CDCS…GCRP), 2072 to 2118 (CACG…GCRR), and 2119 to 2168 (CQCP…HCEV). An N-linked (GlcNAc...) asparagine glycan is attached at Asn2021. The segment at 2169–2735 (CDHCVVLLLD…AQARSAASKV (567 aa)) is domain II and I. Asn2198, Asn2211, Asn2365, Asn2395, Asn2425, Asn2503, and Asn2570 each carry an N-linked (GlcNAc...) asparagine glycan. 2 coiled-coil regions span residues 2205-2257 (ARLH…SQAT) and 2330-2464 (TRDL…ASLD). Coiled coils occupy residues 2604–2621 (ARKN…AMLA) and 2639–2705 (AEAL…LENR). Asn2709 carries N-linked (GlcNAc...) asparagine glycosylation. Laminin G-like domains are found at residues 2736-2933 (KVSM…DKPC), 2947-3119 (GSYL…SFGC), 3128-3296 (TMTF…SVGC), 3337-3511 (AYQF…VTPC), and 3518-3689 (DGLF…MRGC). Disulfide bonds link Cys2903–Cys2933 and Cys3094–Cys3119. Asn3111, Asn3213, Asn3261, and Asn3291 each carry an N-linked (GlcNAc...) asparagine glycan. Intrachain disulfides connect Cys3265–Cys3296 and Cys3488–Cys3511. N-linked (GlcNAc...) asparagine glycans are attached at residues Asn3623 and Asn3673. An intrachain disulfide couples Cys3661 to Cys3689.

In terms of assembly, laminin is a complex glycoprotein, consisting of three different polypeptide chains (alpha, beta, gamma), which are bound to each other by disulfide bonds into a cross-shaped molecule comprising one long and three short arms with globules at each end. Alpha-5 is a subunit of laminin-10 (laminin-511), laminin-11 (laminin-521) and laminin-15 (laminin-523). In adult, high levels in heart, lung, and kidney; lower in brain, muscle and testis; very low in liver, gut and skin.

Its subcellular location is the secreted. The protein resides in the extracellular space. The protein localises to the extracellular matrix. It localises to the basement membrane. In terms of biological role, binding to cells via a high affinity receptor, laminin is thought to mediate the attachment, migration and organization of cells into tissues during embryonic development by interacting with other extracellular matrix components. Alpha-5 may be the major laminin alpha chain of adult epithelial and/or endothelial basal laminae. Plays a role in the regulation of skeletogenesis, through a mechanism that involves integrin-mediated signaling and PTK2B/PYK2. The protein is Laminin subunit alpha-5 (Lama5) of Mus musculus (Mouse).